The following is an 87-amino-acid chain: UPF0175 protein AF_0597 (87 aa).

It belongs to the UPF0175 family.

This is UPF0175 protein AF_0597 from Archaeoglobus fulgidus (strain ATCC 49558 / DSM 4304 / JCM 9628 / NBRC 100126 / VC-16).